The primary structure comprises 252 residues: MRVLQLPALRDNYIYLLHNPDTATAAVVDPAVAEPVLEKLAELGAELVAIFNTHHHHDHVGGNRQLLERYPRARVYGSQVDRGRIPGQTVELKAGETVEFAGRLAKVLFVPGHTRGHIAYYFSESGDLFCGDTLFAGGCGRLFEGTPEQMVGSLDQLRQLPEATRVWCAHEYTLNNLRFALTVDGDNPDLQARYQQVAALRQTGSPTVPSTIGEERRTNPFLRWDQPALQAATGLQDPVRVFARLRGMKDQF.

Residues His54, His56, Asp58, His59, His113, Asp132, and His170 each coordinate Zn(2+).

This sequence belongs to the metallo-beta-lactamase superfamily. Glyoxalase II family. As to quaternary structure, monomer. Zn(2+) serves as cofactor.

The enzyme catalyses an S-(2-hydroxyacyl)glutathione + H2O = a 2-hydroxy carboxylate + glutathione + H(+). It participates in secondary metabolite metabolism; methylglyoxal degradation; (R)-lactate from methylglyoxal: step 2/2. Functionally, thiolesterase that catalyzes the hydrolysis of S-D-lactoyl-glutathione to form glutathione and D-lactic acid. This is Hydroxyacylglutathione hydrolase from Synechococcus sp. (strain JA-2-3B'a(2-13)) (Cyanobacteria bacterium Yellowstone B-Prime).